A 327-amino-acid polypeptide reads, in one-letter code: Tartrate-resistant acid phosphatase type 5 (327 aa).

Residues 1–22 (MDSWVVLLGLQIIWLPLLTHGT) form the signal peptide. Asp35, Asp73, Tyr76, and Asn112 together coordinate Fe cation. N-linked (GlcNAc...) asparagine glycosylation is found at Asn118 and Asn149. A disulfide bridge connects residues Cys163 and Cys221. 3 residues coordinate Fe cation: His207, His242, and His244.

Exists either as monomer or, after proteolytic processing, as a dimer of two chains linked by disulfide bond(s). Fe cation serves as cofactor. As to expression, characteristic constituent of osteoclasts.

It localises to the lysosome. The catalysed reaction is a phosphate monoester + H2O = an alcohol + phosphate. May play a role in the process of bone resorption. The osteoclastic trap acts on nucleotide tri- and diphosphates with higher affinity, compared with other substrates. The protein is Tartrate-resistant acid phosphatase type 5 (Acp5) of Mus musculus (Mouse).